The sequence spans 355 residues: 3-isopropylmalate dehydrogenase (355 aa).

Substrate contacts are provided by R98, R108, R132, and D223. Mg(2+) is bound by residues D223, D247, and D251. Position 283 to 295 (283 to 295) interacts with NAD(+); sequence GSAPDIAGQQKAD.

It belongs to the isocitrate and isopropylmalate dehydrogenases family. LeuB type 2 subfamily. Homodimer. Mg(2+) is required as a cofactor. Mn(2+) serves as cofactor.

Its subcellular location is the cytoplasm. It carries out the reaction (2R,3S)-3-isopropylmalate + NAD(+) = 4-methyl-2-oxopentanoate + CO2 + NADH. It functions in the pathway amino-acid biosynthesis; L-leucine biosynthesis; L-leucine from 3-methyl-2-oxobutanoate: step 3/4. Functionally, catalyzes the oxidation of 3-carboxy-2-hydroxy-4-methylpentanoate (3-isopropylmalate) to 3-carboxy-4-methyl-2-oxopentanoate. The product decarboxylates to 4-methyl-2 oxopentanoate. This chain is 3-isopropylmalate dehydrogenase, found in Clavibacter sepedonicus (Clavibacter michiganensis subsp. sepedonicus).